Reading from the N-terminus, the 249-residue chain is Cobalt transport protein CbiM (249 aa).

Residues 1 to 27 (MKPLHRWLPVVIGAALLIIFESRAAYA) form the signal peptide. The next 6 helical transmembrane spans lie at 33-53 (GFLP…FWVL), 70-90 (LLLG…IPSV), 102-122 (LGTI…VLLF), 134-154 (TLGA…WLIW), 161-181 (APIW…TYVV), and 207-227 (IFAV…VLIF).

It belongs to the CbiM family. Forms an energy-coupling factor (ECF) transporter complex composed of an ATP-binding protein (A component, CbiO), a transmembrane protein (T component, CbiQ) and 2 possible substrate-capture proteins (S components, CbiM and CbiN) of unknown stoichimetry.

It localises to the cell membrane. It participates in cofactor biosynthesis; adenosylcobalamin biosynthesis. In terms of biological role, part of the energy-coupling factor (ECF) transporter complex CbiMNOQ involved in cobalt import. The protein is Cobalt transport protein CbiM of Roseiflexus sp. (strain RS-1).